The following is a 433-amino-acid chain: Glutamate-1-semialdehyde 2,1-aminomutase (433 aa).

At lysine 270 the chain carries N6-(pyridoxal phosphate)lysine.

Belongs to the class-III pyridoxal-phosphate-dependent aminotransferase family. HemL subfamily. In terms of assembly, homodimer. It depends on pyridoxal 5'-phosphate as a cofactor.

The protein localises to the cytoplasm. It carries out the reaction (S)-4-amino-5-oxopentanoate = 5-aminolevulinate. It participates in porphyrin-containing compound metabolism; protoporphyrin-IX biosynthesis; 5-aminolevulinate from L-glutamyl-tRNA(Glu): step 2/2. This chain is Glutamate-1-semialdehyde 2,1-aminomutase, found in Clostridium novyi (strain NT).